A 567-amino-acid polypeptide reads, in one-letter code: MRQSQAFIPTLREVPADAEVKSHQLLLRAGFIRQSASGVYTFLPLGQRVLQKVEAIIREEMNRIGAMELFMPALQPAELWQQSGRWYSYGPELMRLKDRHERDFALGPTHEEMITAIVRDEVKTYKRLPLVLYQIQTKFRDEKRPRFGLLRGREFMMKDAYSFHTSKESLDETYNNMYEAYANIFRRCGLNFRAVIADSGAIGGKDTHEFMVLSDIGEDTIAYSDASDYAANIEMAPVVATYEKSDEPPAELKKVATPGQKTIAEVASHLQISPERCIKSLLFNVDGRYVLVLVRGDHEANEVKVKNVLDATVVELATPEETERVMNAPIGSLGPIGVSEDVTVIADHAVAAITNGVCGANEEGYHYIGVNPGRDFAVSQYADLRFVKEGDPSPDGKGTIRFARGIEVGHVFKLGTKYSEAMNAVYLDENGQTQTMIMGCYGIGVSRLVAAIAEQFADEHGLVWPASVAPFHIHLLTANAKSDEQRALAEEWYEKLGQAGFEVLYDDRPERAGVKFADSDLIGIPLRVTVGKRAGEGVVEVKVRKTGETFDVPVSELVDTARRLLQS.

The protein belongs to the class-II aminoacyl-tRNA synthetase family. ProS type 1 subfamily. As to quaternary structure, homodimer.

Its subcellular location is the cytoplasm. The enzyme catalyses tRNA(Pro) + L-proline + ATP = L-prolyl-tRNA(Pro) + AMP + diphosphate. Its function is as follows. Catalyzes the attachment of proline to tRNA(Pro) in a two-step reaction: proline is first activated by ATP to form Pro-AMP and then transferred to the acceptor end of tRNA(Pro). As ProRS can inadvertently accommodate and process non-cognate amino acids such as alanine and cysteine, to avoid such errors it has two additional distinct editing activities against alanine. One activity is designated as 'pretransfer' editing and involves the tRNA(Pro)-independent hydrolysis of activated Ala-AMP. The other activity is designated 'posttransfer' editing and involves deacylation of mischarged Ala-tRNA(Pro). The misacylated Cys-tRNA(Pro) is not edited by ProRS. This Geobacillus kaustophilus (strain HTA426) protein is Proline--tRNA ligase.